A 371-amino-acid polypeptide reads, in one-letter code: o-succinylbenzoate synthase (371 aa).

K164 serves as the catalytic Proton donor. Mg(2+)-binding residues include D189, E214, and D239. The active-site Proton acceptor is K263.

This sequence belongs to the mandelate racemase/muconate lactonizing enzyme family. MenC type 2 subfamily. Requires a divalent metal cation as cofactor.

It carries out the reaction (1R,6R)-6-hydroxy-2-succinyl-cyclohexa-2,4-diene-1-carboxylate = 2-succinylbenzoate + H2O. Its pathway is quinol/quinone metabolism; 1,4-dihydroxy-2-naphthoate biosynthesis; 1,4-dihydroxy-2-naphthoate from chorismate: step 4/7. It functions in the pathway quinol/quinone metabolism; menaquinone biosynthesis. Converts 2-succinyl-6-hydroxy-2,4-cyclohexadiene-1-carboxylate (SHCHC) to 2-succinylbenzoate (OSB). Does not show detectable N-acylamino acid racemase (NAAAR) activity with N-acetyl-S-methionine as substrate. In Bacillus subtilis (strain 168), this protein is o-succinylbenzoate synthase.